The following is a 339-amino-acid chain: Nicotinate-nucleotide--dimethylbenzimidazole phosphoribosyltransferase (339 aa).

The active-site Proton acceptor is the Glu-306.

The protein belongs to the CobT family.

The catalysed reaction is 5,6-dimethylbenzimidazole + nicotinate beta-D-ribonucleotide = alpha-ribazole 5'-phosphate + nicotinate + H(+). Its pathway is nucleoside biosynthesis; alpha-ribazole biosynthesis; alpha-ribazole from 5,6-dimethylbenzimidazole: step 1/2. Its function is as follows. Catalyzes the synthesis of alpha-ribazole-5'-phosphate from nicotinate mononucleotide (NAMN) and 5,6-dimethylbenzimidazole (DMB). In Brucella canis (strain ATCC 23365 / NCTC 10854 / RM-666), this protein is Nicotinate-nucleotide--dimethylbenzimidazole phosphoribosyltransferase.